The primary structure comprises 756 residues: Centromere protein I (756 aa).

A disordered region spans residues 1 to 60 (MSPQKRVKNVQAQNRTSQGSSSFQTTLSAWKVKQDPSNSKNISKHGQNNPVGDYEHADDQ). Polar residues-rich tracts occupy residues 10 to 28 (VQAQ…TTLS) and 35 to 50 (DPSN…QNNP).

The protein belongs to the CENP-I/CTF3 family. As to quaternary structure, component of the CENPA-CAD complex, composed of CENPI, CENPK, CENPL, CENPO, CENPP, CENPQ, CENPR and CENPS. The CENPA-CAD complex interacts with the CENPA-NAC complex, at least composed of CENPA, CENPC, CENPH, CENPM, CENPN, CENPT and CENPU. Interacts with SENP6. Post-translationally, sumoylated. Sumoylated form can be polyubiquitinated by RNF4, leading to its degradation. Desumoylation by SENP6 prevents its degradation.

It is found in the nucleus. It localises to the chromosome. Its subcellular location is the centromere. In terms of biological role, component of the CENPA-CAD (nucleosome distal) complex, a complex recruited to centromeres which is involved in assembly of kinetochore proteins, mitotic progression and chromosome segregation. May be involved in incorporation of newly synthesized CENPA into centromeres via its interaction with the CENPA-NAC complex. Required for the localization of CENPF, MAD1L1 and MAD2 (MAD2L1 or MAD2L2) to kinetochores. Involved in the response of gonadal tissues to follicle-stimulating hormone. This chain is Centromere protein I (CENPI), found in Homo sapiens (Human).